The chain runs to 663 residues: F-box protein DAS1 (663 aa).

Residues V46–I91 enclose the F-box domain.

As to quaternary structure, interacts with SKP1. Component of the probable SCF(DAS1) complex containing CDC53, SKP1, RBX1 and DAS1.

It participates in protein modification; protein ubiquitination. In terms of biological role, substrate recognition component of a SCF (SKP1-CUL1-F-box protein) E3 ubiquitin-protein ligase complex which mediates the ubiquitination and subsequent proteasomal degradation of target proteins. Probably recognizes and binds to phosphorylated target proteins. This Saccharomyces cerevisiae (strain ATCC 204508 / S288c) (Baker's yeast) protein is F-box protein DAS1 (DAS1).